We begin with the raw amino-acid sequence, 505 residues long: Betaine aldehyde dehydrogenase 1 (505 aa).

Position 163–172 (163–172 (WNYPLLMATW)) interacts with betaine aldehyde. 240-245 (GSTETG) contacts NAD(+). Residues Glu262, 294–297 (QVCS), and Cys455 each bind betaine aldehyde. Residues Glu262 and Cys296 contribute to the active site. 4-aminobutanal-binding positions include 262–263 (EL) and Cys296. 4-aminobutanal is bound at residue Trp461. The Microbody targeting signal signature appears at 503-505 (SKL).

Belongs to the aldehyde dehydrogenase family. As to quaternary structure, homodimer.

Its subcellular location is the peroxisome. The catalysed reaction is betaine aldehyde + NAD(+) + H2O = glycine betaine + NADH + 2 H(+). The protein operates within amine and polyamine biosynthesis; betaine biosynthesis via choline pathway; betaine from betaine aldehyde: step 1/1. Its function is as follows. Dehydrogenase that can use N-acetyl-gamma-aminobutyraldehyde (NAGABald), gamma-guanidinobutyraldehyde (GGBald), betaine aldehyde (Bet-ald), gamma-aminobutyraldehyde (GAB-ald), acetaldehyde, 4-aminobutylaldehyde (AB-ald), 3-aminopropionaldehyde (AP-ald), 4-N-trimethylaminobutyraldehyde (TMAB-ald) and 3-N-trimethylaminopropionaldehyde (TMAP-ald) as substrates. Catalyzes the oxidation of GAB-ald more efficiently than Bet-ald. May convert acetaldehyde into acetate, thus facilitating the production of acetyl-CoA in peroxisomes under anaerobic conditions. The sequence is that of Betaine aldehyde dehydrogenase 1 (BADH1) from Oryza sativa subsp. japonica (Rice).